The sequence spans 156 residues: 6,7-dimethyl-8-ribityllumazine synthase (156 aa).

Residues Phe-22, 57 to 59 (AYE), and 81 to 83 (TVI) each bind 5-amino-6-(D-ribitylamino)uracil. A (2S)-2-hydroxy-3-oxobutyl phosphate-binding site is contributed by 86 to 87 (GT). The Proton donor role is filled by His-89. Position 114 (Phe-114) interacts with 5-amino-6-(D-ribitylamino)uracil. Arg-128 lines the (2S)-2-hydroxy-3-oxobutyl phosphate pocket.

It belongs to the DMRL synthase family. As to quaternary structure, forms an icosahedral capsid composed of 60 subunits, arranged as a dodecamer of pentamers.

The catalysed reaction is (2S)-2-hydroxy-3-oxobutyl phosphate + 5-amino-6-(D-ribitylamino)uracil = 6,7-dimethyl-8-(1-D-ribityl)lumazine + phosphate + 2 H2O + H(+). Its pathway is cofactor biosynthesis; riboflavin biosynthesis; riboflavin from 2-hydroxy-3-oxobutyl phosphate and 5-amino-6-(D-ribitylamino)uracil: step 1/2. Catalyzes the formation of 6,7-dimethyl-8-ribityllumazine by condensation of 5-amino-6-(D-ribitylamino)uracil with 3,4-dihydroxy-2-butanone 4-phosphate. This is the penultimate step in the biosynthesis of riboflavin. The sequence is that of 6,7-dimethyl-8-ribityllumazine synthase from Edwardsiella ictaluri (strain 93-146).